The following is a 432-amino-acid chain: Adenylosuccinate synthetase (432 aa).

GTP is bound by residues 13–19 (GDEGKGK) and 41–43 (GHT). The active-site Proton acceptor is aspartate 14. Positions 14 and 41 each coordinate Mg(2+). Residues 14 to 17 (DEGK), 39 to 42 (NAGH), threonine 130, arginine 144, glutamine 225, threonine 240, and arginine 304 each bind IMP. Histidine 42 acts as the Proton donor in catalysis. Residue 300–306 (ATTGRSR) coordinates substrate. Residues arginine 306, 332–334 (KLD), and 415–417 (STG) each bind GTP.

Belongs to the adenylosuccinate synthetase family. As to quaternary structure, homodimer. It depends on Mg(2+) as a cofactor.

The protein resides in the cytoplasm. It carries out the reaction IMP + L-aspartate + GTP = N(6)-(1,2-dicarboxyethyl)-AMP + GDP + phosphate + 2 H(+). It participates in purine metabolism; AMP biosynthesis via de novo pathway; AMP from IMP: step 1/2. Its function is as follows. Plays an important role in the de novo pathway of purine nucleotide biosynthesis. Catalyzes the first committed step in the biosynthesis of AMP from IMP. The chain is Adenylosuccinate synthetase from Yersinia pseudotuberculosis serotype O:1b (strain IP 31758).